The chain runs to 975 residues: Leucine-zipper-like transcriptional regulator 1 homolog (975 aa).

Residues Arg16 to Ala32 are compositionally biased toward gly residues. Disordered regions lie at residues Arg16–Ser41 and Met158–Ser186. The span at Ala174–Ser186 shows a compositional bias: low complexity. Kelch repeat units follow at residues Ala263–Ser312, Met314–Asn369, Lys370–Val417, Ala421–Arg467, Phe478–Ser524, and Ala530–Gly581. 2 BTB domains span residues Cys574–Asp670 and Cys801–Pro870.

It belongs to the LZTR1 family. As to quaternary structure, component of some BCR (BTB-CUL3-RBX1) E3 ubiquitin-protein ligase complex. In terms of tissue distribution, expressed in Rdl-expressing neurons of the mushroom body, the neurons projecting to the LC9 optic glomerulus and in a neuronal cluster near the subesophageal ganglion (at protein level).

It participates in protein modification; protein ubiquitination. Inhibitor of Ras signaling. Acts as a substrate-specific adapter of a BCR (BTB-CUL3-RBX1) E3 ubiquitin-protein ligase complex that mediates ubiquitination of Ras. Together with Nf1, plays an important role for normal sleep behavior, mainly during the night. Might affect sleep by modulating GABA signaling in Rdl-expressing neurons. Might play a role in the regulation of brain glycogen metabolism and organismal levels of triglycerides. This is Leucine-zipper-like transcriptional regulator 1 homolog from Drosophila melanogaster (Fruit fly).